Consider the following 178-residue polypeptide: Large ribosomal subunit protein bL19 (178 aa).

This sequence belongs to the bacterial ribosomal protein bL19 family.

In terms of biological role, this protein is located at the 30S-50S ribosomal subunit interface and may play a role in the structure and function of the aminoacyl-tRNA binding site. The chain is Large ribosomal subunit protein bL19 from Rhizobium etli (strain ATCC 51251 / DSM 11541 / JCM 21823 / NBRC 15573 / CFN 42).